Here is a 422-residue protein sequence, read N- to C-terminus: MQQPQPQGQQQPGPGQQLGVQGAAPGAGGGPGGGPGPGPCLRRELKLLESIFHRGHERFRIASACLDELSCEFLLAGAGGAGAGAAPGPHLPSRGSVPGDPVRIHCNITESYPAVPPIWSVESDDPNLAAVLERLVDIKKGNTLLLQHLKRIISDLCKLYNLPQHPDVEMLDQPLPAEQCTQEEVSSEDEDEEMPEDTEDLDHYEMKEEEPAEGKKSEDDGIGKENLAILEKIKKNQRQDYLNGAVSGSVQATDRLMKELRDIYRSQSFKGGNYAVELVNDSLYDWNVKLLKVDQDSALHNDLQILKEKEGADFILLNFSFKDNFPFDPPFVRVVSPVLSGGYVLGGGAICMELLTKQGWSSAYSIESVIMQISATLVKGKARVQFGANKSQYSLTRAQQSYKSLVQIHEKNGWYTPPKEDG.

Met-1 is subject to N-acetylmethionine. The segment covering 1–24 (MQQPQPQGQQQPGPGQQLGVQGAA) has biased composition (low complexity). 2 disordered regions span residues 1 to 40 (MQQP…PGPC) and 173 to 221 (QPLP…EDDG). Positions 25-35 (PGAGGGPGGGP) are enriched in gly residues. Acidic residues predominate over residues 185-200 (VSSEDEDEEMPEDTED). Basic and acidic residues predominate over residues 212 to 221 (AEGKKSEDDG). One can recognise a UBC core domain in the interval 251–415 (QATDRLMKEL…VQIHEKNGWY (165 aa)). The Glycyl thioester intermediate role is filled by Cys-351.

This sequence belongs to the ubiquitin-conjugating enzyme family. In terms of assembly, monomer and homodimer. Only the homodimer is linked to ubiquitin through thiolester activation. Interacts (via N-terminus) with B4GALT1 (via N-terminal cytoplasmic domain); the interaction is direct. Autoubiquitinated in vitro in the presence of NEDD4L. In terms of tissue distribution, expressed in liver, brain, heart, spleen, lung, kidney, muscle, ovary, epididymis, testis and placenta. Also expressed in thymus and ES cells. Only expressed in the uterus during pregnancy. Expressed in oocytes and during subsequent embryonic development stages (4-cell stage, blastocyst, 8.5 dpc, 13.5 dpc, 16.5 dpc and 18.5 dpc).

Its subcellular location is the nucleus. It is found in the cell projection. It localises to the filopodium. The protein localises to the cytoplasm. The protein resides in the cytosol. It catalyses the reaction S-ubiquitinyl-[E1 ubiquitin-activating enzyme]-L-cysteine + [E2 ubiquitin-conjugating enzyme]-L-cysteine = [E1 ubiquitin-activating enzyme]-L-cysteine + S-ubiquitinyl-[E2 ubiquitin-conjugating enzyme]-L-cysteine.. Its pathway is protein modification; protein ubiquitination. Functionally, catalyzes the covalent attachment of ubiquitin to other proteins. Involved in female fertility and embryo implantation. May be involved in hormonal homeostasis in females. Involved in regulation of B4GALT1 cell surface expression, B4GALT1-mediated cell adhesion to laminin and embryoid body formation. This Mus musculus (Mouse) protein is Ubiquitin-conjugating enzyme E2 Q1 (Ube2q1).